The chain runs to 149 residues: UPF0260 protein Psyr_1567 (149 aa).

The protein belongs to the UPF0260 family.

This Pseudomonas syringae pv. syringae (strain B728a) protein is UPF0260 protein Psyr_1567.